The sequence spans 378 residues: Histidinol-phosphate aminotransferase (378 aa).

Residues 1–20 are disordered; the sequence is MSVSAKETQRHPARPEPRPG. Basic and acidic residues predominate over residues 7–17; that stretch reads ETQRHPARPEP. N6-(pyridoxal phosphate)lysine is present on lysine 232.

It belongs to the class-II pyridoxal-phosphate-dependent aminotransferase family. Histidinol-phosphate aminotransferase subfamily. Homodimer. Pyridoxal 5'-phosphate serves as cofactor.

It catalyses the reaction L-histidinol phosphate + 2-oxoglutarate = 3-(imidazol-4-yl)-2-oxopropyl phosphate + L-glutamate. It functions in the pathway amino-acid biosynthesis; L-histidine biosynthesis; L-histidine from 5-phospho-alpha-D-ribose 1-diphosphate: step 7/9. This Azorhizobium caulinodans (strain ATCC 43989 / DSM 5975 / JCM 20966 / LMG 6465 / NBRC 14845 / NCIMB 13405 / ORS 571) protein is Histidinol-phosphate aminotransferase.